The sequence spans 124 residues: Holo-[acyl-carrier-protein] synthase (124 aa).

Mg(2+) contacts are provided by Asp8 and Glu60.

The protein belongs to the P-Pant transferase superfamily. AcpS family. Requires Mg(2+) as cofactor.

The protein localises to the cytoplasm. It carries out the reaction apo-[ACP] + CoA = holo-[ACP] + adenosine 3',5'-bisphosphate + H(+). Transfers the 4'-phosphopantetheine moiety from coenzyme A to a Ser of acyl-carrier-protein. The sequence is that of Holo-[acyl-carrier-protein] synthase from Wolbachia pipientis subsp. Culex pipiens (strain wPip).